We begin with the raw amino-acid sequence, 378 residues long: UPF0754 membrane protein BCE_0952 (378 aa).

The next 2 helical transmembrane spans lie at 1 to 21 (MNIW…GGFT) and 357 to 377 (YLGA…LLFL).

This sequence belongs to the UPF0754 family.

The protein localises to the cell membrane. The polypeptide is UPF0754 membrane protein BCE_0952 (Bacillus cereus (strain ATCC 10987 / NRS 248)).